A 349-amino-acid polypeptide reads, in one-letter code: GDSL esterase/lipase At1g58725 (349 aa).

An N-terminal signal peptide occupies residues 1 to 19 (MKIQILLFALVLIFVEANA). A glycan (N-linked (GlcNAc...) asparagine) is linked at N25. S37 serves as the catalytic Nucleophile. An N-linked (GlcNAc...) asparagine glycan is attached at N316. Catalysis depends on residues D324 and H327.

It belongs to the 'GDSL' lipolytic enzyme family.

It is found in the secreted. The protein is GDSL esterase/lipase At1g58725 of Arabidopsis thaliana (Mouse-ear cress).